Consider the following 200-residue polypeptide: Inducible T-cell costimulator (200 aa).

A signal peptide spans 1-20; it reads MKPYFCRVFVFCFLIRLLTG. Topologically, residues 21–144 are extracellular; sequence EINGSADHRM…QLCCQLKLWL (124 aa). N23 carries N-linked (GlcNAc...) asparagine glycosylation. An Ig-like V-type domain is found at 30–133; the sequence is MFSFHNGGVQ…LSGGYLHIYE (104 aa). Disulfide bonds link C42–C109 and C63–C83. N-linked (GlcNAc...) asparagine glycosylation is found at N89 and N123. A helical transmembrane segment spans residues 145–165; that stretch reads PVGCAAFVVVLLFGCILIIWF. The Cytoplasmic portion of the chain corresponds to 166–200; sequence SKKKYGSSVHDPNSEYMFMAAVNTNKKSRLAGVTS.

As to quaternary structure, homodimer; disulfide-linked. Interacts with ICOSLG. Interacts with PIK3R1. Interacts with TBK1; this interaction is critical for the maturation of T follicular regulatory cells. Post-translationally, N-glycosylated. In terms of tissue distribution, expressed on activated T-cells and resting memory T-cells. High expression seen in the thymic medulla and in the germinal centers and T-cell zones of lymph nodes and Peyer patches. Expressed at low levels in the spleen.

It is found in the cell membrane. Its function is as follows. Stimulatory receptor expressed in activated or antigen-experienced T-cells that plays an important role in the immune response. Upon binding to its ligand ICOSL expressed on antigen presenting cells (APCs), delivers costimulatory signals that enhances all basic T-cell responses to a foreign antigen, namely proliferation, secretion of lymphokines including IL10, up-regulation of molecules that mediate cell-cell interaction, and effective help for antibody secretion by B-cells. Also acts as a costimulatory receptor critical for the differentiation of T follicular regulatory cells upon immune challenges such as viral infection. Mechanistically, potentiates TCR-induced calcium flux by augmenting PLCG1 activation and actin remodeling. In addition, activates PI3K signaling pathways independently of calcium flux. Essential both for efficient interaction between T and B-cells and for normal antibody responses to T-cell dependent antigens. Prevents the apoptosis of pre-activated T-cells. Plays a critical role in CD40-mediated class switching of immunoglobin isotypes. This chain is Inducible T-cell costimulator (Icos), found in Mus musculus (Mouse).